Here is a 430-residue protein sequence, read N- to C-terminus: Tol-Pal system protein TolB (430 aa).

A signal peptide spans 1-21 (MKQALRVAFGFLILWASVLHA).

This sequence belongs to the TolB family. As to quaternary structure, the Tol-Pal system is composed of five core proteins: the inner membrane proteins TolA, TolQ and TolR, the periplasmic protein TolB and the outer membrane protein Pal. They form a network linking the inner and outer membranes and the peptidoglycan layer.

The protein resides in the periplasm. In terms of biological role, part of the Tol-Pal system, which plays a role in outer membrane invagination during cell division and is important for maintaining outer membrane integrity. TolB occupies a key intermediary position in the Tol-Pal system because it communicates directly with both membrane-embedded components, Pal in the outer membrane and TolA in the inner membrane. The chain is Tol-Pal system protein TolB from Shigella boydii serotype 18 (strain CDC 3083-94 / BS512).